The following is a 440-amino-acid chain: Protein FPV117 (440 aa).

The protein belongs to the poxviruses G5 family.

In Fowlpox virus (strain NVSL) (FPV), this protein is Protein FPV117.